A 90-amino-acid chain; its full sequence is Small ribosomal subunit protein uS17 (90 aa).

It belongs to the universal ribosomal protein uS17 family. As to quaternary structure, part of the 30S ribosomal subunit.

Functionally, one of the primary rRNA binding proteins, it binds specifically to the 5'-end of 16S ribosomal RNA. The sequence is that of Small ribosomal subunit protein uS17 from Burkholderia cenocepacia (strain ATCC BAA-245 / DSM 16553 / LMG 16656 / NCTC 13227 / J2315 / CF5610) (Burkholderia cepacia (strain J2315)).